The chain runs to 638 residues: XK-related protein 6 (638 aa).

Disordered stretches follow at residues 24–43 (VGSG…GGDG) and 82–117 (RSAA…PASP). Residues 33–43 (PGGGGCGGGDG) are compositionally biased toward gly residues. 7 helical membrane passes run 127-147 (LWIV…LWLA), 158-178 (CFGL…SLSF), 315-335 (TLPC…LASY), 369-389 (VISF…FVVV), 410-430 (WEEI…WFNV), 439-459 (MFAY…LWYF), and 470-490 (AVPA…LMLL).

It belongs to the XK family.

The protein resides in the cell membrane. In Mus musculus (Mouse), this protein is XK-related protein 6.